A 471-amino-acid chain; its full sequence is MPN domain-containing protein (471 aa).

Positions 1–10 are enriched in low complexity; sequence MAAPEPLSPA. The interval 1-63 is disordered; it reads MAAPEPLSPA…GGGGAGAGGC (63 aa). A2 carries the N-acetylalanine modification. Phosphoserine is present on S8. Acidic residues predominate over residues 16 to 29; it reads EAPEEDEDEAEAED. Residues 36–63 show a composition bias toward gly residues; sequence GAGGGRSGGGGSSVSGGGGGGGAGAGGC. Positions 71–166 constitute an RAMA domain; that stretch reads TRRAVTLRVL…KYKATWLRLH (96 aa). DNA is bound by residues S123, S125, and W145. Residues 170-229 are disordered; it reads TPATAADESPASEGEEEELLMEEEEEDVLAGVSAEDKSRRPLGKSPSEPAHPEATTPGKR. 2 positions are modified to phosphoserine: S178 and S181. Positions 182-197 are enriched in acidic residues; it reads EGEEEELLMEEEEEDV. In terms of domain architecture, MPN spans 272-407; the sequence is VAVSSNVLFL…PESKISPFWV (136 aa). Zn(2+) contacts are provided by H349, H351, and D362. A JAMM motif motif is present at residues 349–362; sequence HSHPHSPALPSLQD.

This sequence belongs to the peptidase M67 family. As to quaternary structure, monomer. Mainly monomoric, but when binds to dsDNA, forms homotetramer assembled into two homodimers. May interact with histones; this interaction is facilitated by dsDNA binding. Degraded following binding to N(6)-methyladenosine methylated DNA (m6A).

Its function is as follows. Probable protease. Acts as a sensor of N(6)-methyladenosine methylation on DNA (m6A): recognizes and binds m6A DNA, leading to its degradation. Binds only double strand DNA (dsDNA) in a sequence-independent manner. The chain is MPN domain-containing protein from Homo sapiens (Human).